Here is a 77-residue protein sequence, read N- to C-terminus: Secapin-2 (77 aa).

Positions 1–32 are cleaved as a signal peptide; that stretch reads MKNYSKNATYLITVLLFSFVTMLLIIPSKCEA. Residues 33 to 52 constitute a propeptide that is removed on maturation; that stretch reads VSNDMQPLEARTADLVQQPR. Cys61 and Cys72 are oxidised to a cystine. A Proline amide modification is found at Pro77.

This sequence belongs to the secapin family. Expressed by the venom gland.

It localises to the secreted. Serine protease inhibitor which exhibits antifibrinolytic, antielastolytic and antimicrobial activities. Displays antimicrobial activity against bacteria and fungi. Likely functions in the innate immune response to microbial infection and possibly in the venom, as an antifibrinolytic agent. Induces hyperalgesia and edema mediated by leukotrienes when injected into mice. Does not induce hemolytic activity, mast cell degranulation, or chemotactic activity for polymorphonucleated leukocytes (PMNL). The chain is Secapin-2 from Apis mellifera (Honeybee).